The following is a 269-amino-acid chain: Hydroxyethylthiazole kinase (269 aa).

M46 is a substrate binding site. R122 and T168 together coordinate ATP. Substrate is bound at residue G195.

This sequence belongs to the Thz kinase family. Requires Mg(2+) as cofactor.

The enzyme catalyses 5-(2-hydroxyethyl)-4-methylthiazole + ATP = 4-methyl-5-(2-phosphooxyethyl)-thiazole + ADP + H(+). It functions in the pathway cofactor biosynthesis; thiamine diphosphate biosynthesis; 4-methyl-5-(2-phosphoethyl)-thiazole from 5-(2-hydroxyethyl)-4-methylthiazole: step 1/1. Its function is as follows. Catalyzes the phosphorylation of the hydroxyl group of 4-methyl-5-beta-hydroxyethylthiazole (THZ). This chain is Hydroxyethylthiazole kinase, found in Geobacillus thermodenitrificans (strain NG80-2).